The chain runs to 196 residues: MSGAGPASPGRSGSALPLPLPLSLSLTGDRKREVPAAGTLLQPIIKDVGEIYSRLLDHRPVIQGEIRYFVKEFEEKRGLRELRVLENLKKTIFETNEDILPKCKQSMHDNLNEVLQRLQAANDTIHKLQEKEHEKRKIQADKLMAGEEKRIAQQETFLQEQQSKREEVDEEHRKAMERLKEQYSEMEKELAKYVSF.

Positions 103 to 196 (CKQSMHDNLN…EKELAKYVSF (94 aa)) form a coiled coil.

The protein belongs to the BLOC1S5 family. Component of the biogenesis of lysosome-related organelles complex 1 (BLOC-1).

Its function is as follows. Component of the BLOC-1 complex, a complex that is required for normal biogenesis of lysosome-related organelles (LRO), such as platelet dense granules and melanosomes. Plays a role in intracellular vesicle trafficking. In Gallus gallus (Chicken), this protein is Biogenesis of lysosome-related organelles complex 1 subunit 5 (BLOC1S5).